The sequence spans 677 residues: Electrogenic aspartate/glutamate antiporter SLC25A12, mitochondrial (677 aa).

N-acetylalanine is present on A2. The regulatory N-terminal domain stretch occupies residues 2–294 (AVKVHTTKRG…TLADIERIAP (293 aa)). Residues 2 to 329 (AVKVHTTKRG…WLQIAESAYR (328 aa)) are Mitochondrial intermembrane-facing. EF-hand domains are found at residues 40-85 (VQRY…SVLC), 86-121 (APDSMFIVAFQLFDKSGNGEVTFENVKEIFGQTIIH), 122-156 (HHIPFNWDCEFIRLHFGHNRKKHLNYVEFTQFLQE), and 157-192 (LQLEHARQAFALKDKSKSGMISGLDFSDVMVTIRSH). Residues D65, T67, D69, L71, and E76 each coordinate Ca(2+). The segment at 295-310 (LAEGALPYNLAELQRQ) is linker loop domain. Positions 320-612 (WLQIAESAYR…RWFYIDFGGL (293 aa)) are carrier domain. 3 Solcar repeats span residues 324 to 416 (AESA…VRDK), 424 to 508 (IPLP…CKLL), and 516 to 604 (VGGI…LQRW). A helical transmembrane segment spans residues 330–347 (FTLGSVAGAVGATAVYPI). Residues 348-390 (DLVKTRMQNQRGTGSVVGELMYKNSFDCFKKVLRYEGFFGLYR) lie on the Mitochondrial matrix side of the membrane. A helical membrane pass occupies residues 391–410 (GLIPQLIGVAPEKAIKLTVN). The Mitochondrial intermembrane portion of the chain corresponds to 411–433 (DFVRDKFTKRDGSIPLPAEILAG). Residues 434 to 447 (GCAGGSQVIFTNPL) traverse the membrane as a helical segment. The Mitochondrial matrix portion of the chain corresponds to 448 to 482 (EIVKIRLQVAGEITTGPRVSALNVLQDLGLFGLYK). The helical transmembrane segment at 483 to 502 (GAKACFLRDIPFSAIYFPVY) threads the bilayer. Over 503–521 (AHCKLLLADENGRVGGINL) the chain is Mitochondrial intermembrane. A helical membrane pass occupies residues 522–539 (LTAGALAGVPAASLVTPA). At 540–578 (DVIKTRLQVAARAGQTTYSGVVDCFRKILREEGPSAFWK) the chain is on the mitochondrial matrix side. Residues 579–598 (GTAARVFRSSPQFGVTLVTY) form a helical membrane-spanning segment. The Mitochondrial intermembrane portion of the chain corresponds to 599 to 677 (ELLQRWFYID…AQPKAAAAAQ (79 aa)). Positions 613 to 677 (KPSGSEPTPK…AQPKAAAAAQ (65 aa)) are C-terminal domain.

The protein belongs to the mitochondrial carrier (TC 2.A.29) family. In terms of assembly, homodimer (via N-terminus).

The protein resides in the mitochondrion inner membrane. It carries out the reaction L-aspartate(in) + L-glutamate(out) + H(+)(out) = L-aspartate(out) + L-glutamate(in) + H(+)(in). The enzyme catalyses 3-sulfino-L-alanine(out) + L-glutamate(in) + H(+)(in) = 3-sulfino-L-alanine(in) + L-glutamate(out) + H(+)(out). The catalysed reaction is 3-sulfino-L-alanine(out) + L-aspartate(in) = 3-sulfino-L-alanine(in) + L-aspartate(out). Mitochondrial electrogenic aspartate/glutamate antiporter that favors efflux of aspartate and entry of glutamate and proton within the mitochondria as part of the malate-aspartate shuttle. Also mediates the uptake of L-cysteinesulfinate (3-sulfino-L-alanine) by mitochondria in exchange of L-glutamate and proton. Can also exchange L-cysteinesulfinate with aspartate in their anionic form without any proton translocation. Lacks transport activity towards L-glutamine or gamma-aminobutyric acid (GABA). The protein is Electrogenic aspartate/glutamate antiporter SLC25A12, mitochondrial of Mus musculus (Mouse).